The sequence spans 188 residues: dCTP deaminase (188 aa).

Residues K111–R116, T135–E137, Q156, Y170, and Q180 contribute to the dCTP site. E137 (proton donor/acceptor) is an active-site residue.

It belongs to the dCTP deaminase family. In terms of assembly, homotrimer.

It carries out the reaction dCTP + H2O + H(+) = dUTP + NH4(+). It functions in the pathway pyrimidine metabolism; dUMP biosynthesis; dUMP from dCTP (dUTP route): step 1/2. In terms of biological role, catalyzes the deamination of dCTP to dUTP. The chain is dCTP deaminase from Chromohalobacter salexigens (strain ATCC BAA-138 / DSM 3043 / CIP 106854 / NCIMB 13768 / 1H11).